Consider the following 76-residue polypeptide: MAYRQSFYQFLMTLRDPDSNGDLAQFANNAQFDSTFPRQEQDRTRLSEYLEENAAYLPSMTIFDDAYQAYEEKMQY.

The protein belongs to the UPF0346 family.

The sequence is that of UPF0346 protein LBUL_1194 from Lactobacillus delbrueckii subsp. bulgaricus (strain ATCC BAA-365 / Lb-18).